Here is a 595-residue protein sequence, read N- to C-terminus: MFS-type efflux pump MFS2 (595 aa).

N-linked (GlcNAc...) asparagine glycosylation is present at asparagine 62. The next 12 membrane-spanning stretches (helical) occupy residues 69 to 89 (WSITFVVAIATLAVALISSAY), 106 to 126 (VITLGVSLFVLGFAIGPLIWA), 136 to 156 (LLFFGTYLALTAFNAGAAGSP), 166 to 186 (FFAGSFGSSPLTNAGGVIADM), 197 to 217 (GIFAIAPFLGPVLGPVIGGFL), 225 to 245 (WVEGFLAIFSGVVWIIGSIFL), 301 to 321 (PIVLLLSTYMAIVYGTLYMLF), 336 to 356 (PGIGGLAFLGVLGGILAAMVI), 381 to 401 (LPVAIIGGIAIPIGLFWFAWT), 409 to 429 (IVSIIASAPFGFGMVLVFLSL), 442 to 462 (ASVLAANSVLRSLFGAAFPLF), and 478 to 498 (IPAFLALACVPFPFLFYIYGA).

This sequence belongs to the major facilitator superfamily. DHA1 family. Polyamines/proton antiporter (TC 2.A.1.2.16) subfamily.

The protein resides in the cell membrane. Functionally, MFS-type efflux pump involved in the modulation susceptibility to fluconazole and voriconazole, 2 azoles with similar molecular structure. This is MFS-type efflux pump MFS2 from Trichophyton rubrum (strain ATCC MYA-4607 / CBS 118892) (Athlete's foot fungus).